The primary structure comprises 416 residues: Neurotensin receptor type 2 (416 aa).

Residues 1–32 are Extracellular-facing; that stretch reads METSSPWPPRPSPSAGLSLEARLGVDTRLWAK. A helical membrane pass occupies residues 33–55; that stretch reads VLFTALYSLIFAFGTAGNALSVH. At 56 to 64 the chain is on the cytoplasmic side; sequence VVLKARAGR. A helical transmembrane segment spans residues 65–87; that stretch reads PGRLRYHVLSLALSALLLLLVSM. The Extracellular portion of the chain corresponds to 88 to 109; sequence PMELYNFVWSHYPWVFGDLGCR. A disulfide bridge links cysteine 108 with cysteine 194. The helical transmembrane segment at 110 to 131 threads the bilayer; sequence GYYFVRELCAYATVLSVASLSA. Residues 132 to 154 lie on the Cytoplasmic side of the membrane; the sequence is ERCLAVCQPLRARRLLTPRRTRR. The chain crosses the membrane as a helical span at residues 155–176; it reads LLSLVWVASLGLALPMAVIMGQ. Residues 177–216 lie on the Extracellular side of the membrane; that stretch reads KHEVESADGEPEPASRVCTVLVSRATLQVFIQVNVLVSFA. The helical transmembrane segment at 217 to 237 threads the bilayer; it reads LPLALTAFLNGITVNHLMALY. The Cytoplasmic portion of the chain corresponds to 238 to 297; the sequence is SQVPSASAQVSSIPSRLELLSEEGLLGFITWRKTLSLGVQASLVRHKDASQIRSLQHSAQ. The helical transmembrane segment at 298–318 threads the bilayer; that stretch reads VLRAIVAVYVICWLPYHARRL. Residues 319–337 lie on the Extracellular side of the membrane; it reads MYCYIPDDGWTNELYDFYH. A helical transmembrane segment spans residues 338–358; it reads YFYMVTNTLFYVSSAVTPILY. The Cytoplasmic portion of the chain corresponds to 359–416; it reads NAVSSSFRKLFLESLGSLCGEQHSLVPLPQEAPESTTSTYSFRLWGSPRNPSLGEIQV. Residue cysteine 377 is the site of S-palmitoyl cysteine attachment. Serine 410 carries the phosphoserine modification.

The protein belongs to the G-protein coupled receptor 1 family. Neurotensin receptor subfamily. NTSR2 sub-subfamily. Abundant in cortex and hypothalamus, and lower levels seen in the heart and intestine.

The protein resides in the cell membrane. Receptor for the tridecapeptide neurotensin. It is associated with G proteins that activate a phosphatidylinositol-calcium second messenger system. This is Neurotensin receptor type 2 (Ntsr2) from Rattus norvegicus (Rat).